The chain runs to 105 residues: Large ribosomal subunit protein uL24 (105 aa).

The protein belongs to the universal ribosomal protein uL24 family. As to quaternary structure, part of the 50S ribosomal subunit.

Its function is as follows. One of two assembly initiator proteins, it binds directly to the 5'-end of the 23S rRNA, where it nucleates assembly of the 50S subunit. Functionally, one of the proteins that surrounds the polypeptide exit tunnel on the outside of the subunit. This is Large ribosomal subunit protein uL24 from Psychrobacter arcticus (strain DSM 17307 / VKM B-2377 / 273-4).